The following is a 511-amino-acid chain: 2-isopropylmalate synthase (511 aa).

The Pyruvate carboxyltransferase domain maps to 6-269 (IIIFDTTLRD…YTDIKCENIF (264 aa)). 4 residues coordinate Mn(2+): D15, H203, H205, and N239. Positions 394 to 511 (VIEKLSVISG…SLKVEERKMA (118 aa)) are regulatory domain.

It belongs to the alpha-IPM synthase/homocitrate synthase family. LeuA type 1 subfamily. Homodimer. It depends on Mn(2+) as a cofactor.

The protein localises to the cytoplasm. It carries out the reaction 3-methyl-2-oxobutanoate + acetyl-CoA + H2O = (2S)-2-isopropylmalate + CoA + H(+). Its pathway is amino-acid biosynthesis; L-leucine biosynthesis; L-leucine from 3-methyl-2-oxobutanoate: step 1/4. Catalyzes the condensation of the acetyl group of acetyl-CoA with 3-methyl-2-oxobutanoate (2-ketoisovalerate) to form 3-carboxy-3-hydroxy-4-methylpentanoate (2-isopropylmalate). This Campylobacter jejuni (strain RM1221) protein is 2-isopropylmalate synthase.